Here is a 225-residue protein sequence, read N- to C-terminus: uncharacterized protein (225 aa).

One can recognise a Fe2OG dioxygenase domain in the interval 114–219 (DAEAIIMQVY…RLSVTMRRII (106 aa)).

The protein belongs to the iron/ascorbate-dependent oxidoreductase family.

The protein localises to the cytoplasm. Its subcellular location is the nucleus. This is an uncharacterized protein from Schizosaccharomyces pombe (strain 972 / ATCC 24843) (Fission yeast).